Reading from the N-terminus, the 342-residue chain is S-adenosylmethionine:tRNA ribosyltransferase-isomerase (342 aa).

This sequence belongs to the QueA family. Monomer.

The protein resides in the cytoplasm. It catalyses the reaction 7-aminomethyl-7-carbaguanosine(34) in tRNA + S-adenosyl-L-methionine = epoxyqueuosine(34) in tRNA + adenine + L-methionine + 2 H(+). It participates in tRNA modification; tRNA-queuosine biosynthesis. Functionally, transfers and isomerizes the ribose moiety from AdoMet to the 7-aminomethyl group of 7-deazaguanine (preQ1-tRNA) to give epoxyqueuosine (oQ-tRNA). This is S-adenosylmethionine:tRNA ribosyltransferase-isomerase from Streptococcus pyogenes serotype M2 (strain MGAS10270).